A 1086-amino-acid chain; its full sequence is Formin-like protein 2 (1086 aa).

The N-myristoyl glycine moiety is linked to residue G2. The GBD/FH3 domain occupies L23–E469. S188 is subject to Phosphoserine. A disordered region spans residues S513–L597. Over residues P525–S537 the composition is skewed to pro residues. Over residues D538–P547 the composition is skewed to polar residues. Pro residues-rich tracts occupy residues V548–G576 and P583–L597. Residues I616–A1007 enclose the FH2 domain. Residues N1040–V1079 form the DAD domain.

It belongs to the formin homology family.

It is found in the cytoplasm. Functionally, plays a role in the regulation of cell morphology and cytoskeletal organization. Required in the cortical actin filament dynamics. This Homo sapiens (Human) protein is Formin-like protein 2.